A 577-amino-acid chain; its full sequence is 5'-AMP-activated protein kinase subunit gamma (577 aa).

The tract at residues 45–226 (QSEGVGGGEL…NNNNSNSNNN (182 aa)) is disordered. Residues 58 to 88 (NNNTTNNNTPTNTTTTTNTNTTTMNNSNNNN) are compositionally biased toward low complexity. 2 stretches are compositionally biased toward polar residues: residues 106–121 (SIEQ…SQDG) and 138–155 (ESQS…NNNM). The segment covering 165 to 226 (STDNKSSTNT…NNNNSNSNNN (62 aa)) has biased composition (low complexity). CBS domains are found at residues 279-341 (VIPI…KKPK), 364-426 (ERPS…QLPE), 438-499 (IGTF…LSPS), and 517-574 (QRPE…DVKS).

Belongs to the 5'-AMP-activated protein kinase gamma subunit family.

Its function is as follows. AMPK may be responsible for the regulation of fatty acid synthesis by phosphorylation of acetyl-CoA carboxylase. The protein is 5'-AMP-activated protein kinase subunit gamma (prkag) of Dictyostelium discoideum (Social amoeba).